The following is a 214-amino-acid chain: MKIFFFLALLALVVSATFAQYAESDGSYEEVEGSHDRCQQHQMKLDSCREYVAERCTTMRDFPITWPWKWWKGGCEELRNECCQLLGQMPSECRCDAIWRSIQRELGGFFGTQQGLIGKRLKIAKSLPTQSTWALSAISPNSMVSHIAGKSSILRALPVDVLANAYRISRQEARNLKNNRGQESGVFTPKFTQTSFQPYPEGEDESSLINKASE.

Residues 1-28 (MKIFFFLALLALVVSATFAQYAESDGSY) form the signal peptide. The segment at 180–214 (RGQESGVFTPKFTQTSFQPYPEGEDESSLINKASE) is disordered.

Seed storage protein. In Avena sativa (Oat), this protein is Avenin.